We begin with the raw amino-acid sequence, 572 residues long: Transducin-like enhancer protein 6 (572 aa).

Disordered stretches follow at residues 1 to 30, 92 to 121, and 174 to 236; these read MTSR…SSPT, QSEE…SSFE, and KAKP…VQEP. Residues 14 to 30 are compositionally biased toward polar residues; sequence KSTSPCPGISNSESSPT. WD repeat units follow at residues 284-322, 332-372, 377-416, 419-456, 458-497, 499-538, and 540-571; these read AHGE…AEDR, TPGA…LHVK, CAGL…VVRD, GYPD…KPLE, QFKS…RHMV, QKDS…KVFE, and PEMS…YQIT. Serine 510 bears the Phosphoserine; by PKA mark.

It belongs to the WD repeat Groucho/TLE family. As to quaternary structure, homodimers. Component of the subcortical maternal complex (SCMC), at least composed of NLRP5, KHDC3, OOEP, and TLE6. Within the complex, interacts with NLRP5, KHDC3 and OOEP. The SCMC may facilitate translocation of its components between the nuclear and cytoplasmic compartments. As part of the SCMC interacts with the SCMC-associated protein ZBED3. As part of the SCMC interacts with the SCMC-associated protein NLRP4F. As part of the SCMC interacts with the SCMC-associated protein CFL1/Cofilin-1. Interacts with FOXG1/BF-1; the interaction inhibits TLE1 interaction with FOXG1/BF-1. Interacts with NFATC1. Interacts with PAX6. Component of the subcortical maternal complex (SCMC), at least composed of NLRP5, KHDC3L, OOEP, and TLE6 isoform 1. Within the complex, interacts with NLRP5, KHDC3L and OOEP. The SCMC may facilitate translocation of its components between the nuclear and cytoplasmic compartments.

It localises to the cytoplasm. The protein resides in the nucleus. Its function is as follows. Component of the subcortical maternal complex (SCMC), a multiprotein complex that plays a key role in early embryonic development. The SCMC complex is a structural constituent of cytoplasmic lattices, which consist in fibrous structures found in the cytoplasm of oocytes and preimplantation embryos. They are required to store maternal proteins critical for embryonic development, such as proteins that control epigenetic reprogramming of the preimplantation embryo, and prevent their degradation or activation. Also required for spermatogenesis: regulates spermatogonia proliferation and cell cycle progression, potentially via regulation of cell cycle regulatory genes such as; CEBPB, CEBPA, CSF3, PCNA, and CDK4. Suppresses FOXG1/BF-1-mediated transcriptional repression by inhibiting interaction of the transcriptional corepressor TLE1 with FOXG1 which promotes cortical neuron differentiation. Acts as a transcriptional corepressor of NFATC1-mediated gene expression by contributing to PAX6-mediated repression. Component of the subcortical maternal complex (SCMC), a multiprotein complex that plays a key role in early embryonic development. In Homo sapiens (Human), this protein is Transducin-like enhancer protein 6.